Reading from the N-terminus, the 240-residue chain is Orotidine 5'-phosphate decarboxylase (240 aa).

Residues Asp-16, Lys-37, 64 to 73 (DLKFHDIPTT), Thr-128, Arg-190, Gln-199, Gly-219, and Arg-220 contribute to the substrate site. Lys-66 functions as the Proton donor in the catalytic mechanism.

Belongs to the OMP decarboxylase family. Type 1 subfamily. In terms of assembly, homodimer.

The enzyme catalyses orotidine 5'-phosphate + H(+) = UMP + CO2. The protein operates within pyrimidine metabolism; UMP biosynthesis via de novo pathway; UMP from orotate: step 2/2. Functionally, catalyzes the decarboxylation of orotidine 5'-monophosphate (OMP) to uridine 5'-monophosphate (UMP). This chain is Orotidine 5'-phosphate decarboxylase, found in Prochlorococcus marinus (strain SARG / CCMP1375 / SS120).